Consider the following 317-residue polypeptide: Melanocyte-stimulating hormone receptor (317 aa).

At 1 to 37 (MPVLGSQRRLLGSLNCTPPATFSLTLAPNRTGPQCLE) the chain is on the extracellular side. The N-linked (GlcNAc...) asparagine glycan is linked to Asn29. The chain crosses the membrane as a helical span at residues 38–63 (VSIPDGLFLSLGLVSLVENVLVVAAI). Residues 64 to 72 (AKNRNLHSP) lie on the Cytoplasmic side of the membrane. Residues 73 to 93 (MYYFICCLAVSDLLVSVSNVL) traverse the membrane as a helical segment. The Extracellular portion of the chain corresponds to 94-118 (ETAVMLLLEAGALAARAAVVQQLDN). The helical transmembrane segment at 119 to 140 (VIDVLICGSMVSSLCFLGAIAM) threads the bilayer. Residues 141–163 (DRYISIFYALRYHSVVTLPRAWR) are Cytoplasmic-facing. The helical transmembrane segment at 164 to 183 (IIAAIWVASILTSLLFITYY) threads the bilayer. Residues 184–191 (NHTVVLLC) lie on the Extracellular side of the membrane. Residues 192–211 (LVGFFIAMLALMAILYVHML) traverse the membrane as a helical segment. Over 212-240 (ARACQHARDIARLQKRQHPIHQGFGLKGA) the chain is Cytoplasmic. Residues 241 to 266 (ATLTILLGVFFLCWGPFFLHLSLIVL) form a helical membrane-spanning segment. Residues 267–279 (CPQHPTCGCIFKN) are Extracellular-facing. Residues 280 to 300 (FNLFLALIICNAIVDPLIYAF) traverse the membrane as a helical segment. The Cytoplasmic segment spans residues 301-317 (RSQELRKTLQEVLQCSW). The S-palmitoyl cysteine moiety is linked to residue Cys315.

The protein belongs to the G-protein coupled receptor 1 family. As to quaternary structure, interacts with MGRN1, but does not undergo MGRN1-mediated ubiquitination; this interaction competes with GNAS-binding and thus inhibits agonist-induced cAMP production. Interacts with OPN3; the interaction results in a decrease in MC1R-mediated cAMP signaling and ultimately a decrease in melanin production in melanocytes.

The protein localises to the cell membrane. Its function is as follows. Receptor for MSH (alpha, beta and gamma) and ACTH. The activity of this receptor is mediated by G proteins which activate adenylate cyclase. Mediates melanogenesis, the production of eumelanin (black/brown) and phaeomelanin (red/yellow), via regulation of cAMP signaling in melanocytes. The chain is Melanocyte-stimulating hormone receptor (MC1R) from Alces alces alces (European moose).